A 276-amino-acid polypeptide reads, in one-letter code: Large ribosomal subunit protein uL2 (276 aa).

The tract at residues 222–276 (GVAMNPIDHPLGGGEGRSSGGRHPVSPWGMPTKGYKTRDRKKASSKLIIKRRGQK) is disordered. Residues 259–276 (RDRKKASSKLIIKRRGQK) show a composition bias toward basic residues.

It belongs to the universal ribosomal protein uL2 family. In terms of assembly, part of the 50S ribosomal subunit. Forms a bridge to the 30S subunit in the 70S ribosome.

In terms of biological role, one of the primary rRNA binding proteins. Required for association of the 30S and 50S subunits to form the 70S ribosome, for tRNA binding and peptide bond formation. It has been suggested to have peptidyltransferase activity; this is somewhat controversial. Makes several contacts with the 16S rRNA in the 70S ribosome. In Nitratidesulfovibrio vulgaris (strain ATCC 29579 / DSM 644 / CCUG 34227 / NCIMB 8303 / VKM B-1760 / Hildenborough) (Desulfovibrio vulgaris), this protein is Large ribosomal subunit protein uL2.